Consider the following 268-residue polypeptide: 4-hydroxy-tetrahydrodipicolinate reductase (268 aa).

NAD(+) is bound by residues 7 to 12 and Glu33; that span reads GAGGRM. Arg34 contacts NADP(+). NAD(+)-binding positions include 97-99 and 121-124; these read GTT and SGNM. Residue His155 is the Proton donor/acceptor of the active site. His156 lines the (S)-2,3,4,5-tetrahydrodipicolinate pocket. Lys159 functions as the Proton donor in the catalytic mechanism. 165–166 serves as a coordination point for (S)-2,3,4,5-tetrahydrodipicolinate; the sequence is GT.

This sequence belongs to the DapB family.

It is found in the cytoplasm. It catalyses the reaction (S)-2,3,4,5-tetrahydrodipicolinate + NAD(+) + H2O = (2S,4S)-4-hydroxy-2,3,4,5-tetrahydrodipicolinate + NADH + H(+). It carries out the reaction (S)-2,3,4,5-tetrahydrodipicolinate + NADP(+) + H2O = (2S,4S)-4-hydroxy-2,3,4,5-tetrahydrodipicolinate + NADPH + H(+). The protein operates within amino-acid biosynthesis; L-lysine biosynthesis via DAP pathway; (S)-tetrahydrodipicolinate from L-aspartate: step 4/4. Functionally, catalyzes the conversion of 4-hydroxy-tetrahydrodipicolinate (HTPA) to tetrahydrodipicolinate. The polypeptide is 4-hydroxy-tetrahydrodipicolinate reductase (Brucella abortus (strain 2308)).